A 296-amino-acid polypeptide reads, in one-letter code: tRNA dimethylallyltransferase (296 aa).

An ATP-binding site is contributed by 11–18; the sequence is GPTAVGKT. 13–18 contacts substrate; sequence TAVGKT. The tract at residues 36–39 is interaction with substrate tRNA; the sequence is DSQQ.

It belongs to the IPP transferase family. In terms of assembly, monomer. Mg(2+) is required as a cofactor.

It carries out the reaction adenosine(37) in tRNA + dimethylallyl diphosphate = N(6)-dimethylallyladenosine(37) in tRNA + diphosphate. Its function is as follows. Catalyzes the transfer of a dimethylallyl group onto the adenine at position 37 in tRNAs that read codons beginning with uridine, leading to the formation of N6-(dimethylallyl)adenosine (i(6)A). In Streptococcus agalactiae serotype Ia (strain ATCC 27591 / A909 / CDC SS700), this protein is tRNA dimethylallyltransferase.